The primary structure comprises 148 residues: Cdc42 effector protein 5 (148 aa).

Disordered regions lie at residues 1–89 and 111–148; these read MPVL…DPLL and RPEA…VIGL. Residues 23–37 form the CRIB domain; it reads ISAPLGDFRHTLHVG. Arg38 carries the omega-N-methylarginine modification. A compositionally biased stretch (pro residues) spans 55-76; it reads GPPPEPRAPPAGAPRSPPPPAV. A compositionally biased stretch (low complexity) spans 77–87; that stretch reads PQSAAPSPADP.

This sequence belongs to the BORG/CEP family. As to quaternary structure, interacts with CDC42, in a GTP-dependent manner, and with SEPT7.

It localises to the endomembrane system. It is found in the cytoplasm. Its subcellular location is the cytoskeleton. Functionally, probably involved in the organization of the actin cytoskeleton. May act downstream of CDC42 to induce actin filament assembly leading to cell shape changes. Induces pseudopodia formation in fibroblasts. Inhibits MAPK8 independently of CDC42 binding. Controls septin organization and this effect is negatively regulated by CDC42. In Homo sapiens (Human), this protein is Cdc42 effector protein 5 (CDC42EP5).